Consider the following 569-residue polypeptide: MSNKNKSYDYVIIGGGSAGSVLGNRLSEDKDKEVLVLEAGRSDYFWDLFIQMPAALMFPSGNKFYDWIYSTDEEPHMGGRKVAHARGKVLGGSSSINGMIYQRGNPMDYEGWAEPEGMETWDFAHCLPYFKKLEKTYGAAPYDKFRGHDGPIKLKRGPATNPLFQSFFDAGVEAGYHKTPDVNGFRQEGFGPFDSQVHRGRRMSASRAYLHPAMKRKNLTVETRAFVTEIHYEGRRATGVTYKKNGKLHTIDAKEVILSGGAFNTPQLLQLSGIGDSEFLKSKGIEPRVHLPGVGENFEDHLEVYIQHKCKEPVSLQPSLDIKRMPFIGLQWIFTRTGAAASNHFEGGGFVRSNNEVDYPNLMFHFLPIAVRYDGQKAAVAHGYQVHVGPMYSNSRGSLKIKSKDPFEKPSIRFNYLSTEEDKKEWVEAIRVARNILSQKAMDPFNGGEISPGPEVQTDEEILDWVRRDGETALHPSCSAKMGPASDPMAVVDPLTMKVHGMENLRVVDASAMPRTTNGNIHAPVLMLAEKAADIIRGRKPLEPQYIDYYKHGVHDENEGAIEVKPYAK.

An FAD-binding site is contributed by 9–38; it reads DYVIIGGGSAGSVLGNRLSEDKDKEVLVLE. Catalysis depends on His-475, which acts as the Proton acceptor.

This sequence belongs to the GMC oxidoreductase family. It depends on FAD as a cofactor.

The catalysed reaction is choline + A = betaine aldehyde + AH2. The enzyme catalyses betaine aldehyde + NAD(+) + H2O = glycine betaine + NADH + 2 H(+). Its pathway is amine and polyamine biosynthesis; betaine biosynthesis via choline pathway; betaine aldehyde from choline (cytochrome c reductase route): step 1/1. In terms of biological role, involved in the biosynthesis of the osmoprotectant glycine betaine. Catalyzes the oxidation of choline to betaine aldehyde and betaine aldehyde to glycine betaine at the same rate. This chain is Oxygen-dependent choline dehydrogenase, found in Staphylococcus aureus (strain MSSA476).